Consider the following 111-residue polypeptide: uncharacterized protein (111 aa).

The HIT domain occupies isoleucine 4 to alanine 111. The Histidine triad motif motif lies at histidine 96–histidine 100.

This is an uncharacterized protein from Chlamydia trachomatis serovar D (strain ATCC VR-885 / DSM 19411 / UW-3/Cx).